The primary structure comprises 162 residues: Single-stranded DNA-binding protein 1 (162 aa).

In terms of domain architecture, SSB spans 5 to 110 (LNKVMLIGHL…IVCTDMQMLG (106 aa)). Residues 110–162 (GAKDSGGGTSDASYSQNRPSYSRPSRPEPSSGNYGASPSSGGAQEFEKDDLPF) form a disordered region. Positions 122 to 140 (SYSQNRPSYSRPSRPEPSS) are enriched in low complexity. The segment covering 141–151 (GNYGASPSSGG) has biased composition (polar residues).

In terms of assembly, homotetramer.

The chain is Single-stranded DNA-binding protein 1 (ssb1) from Chlorobaculum tepidum (strain ATCC 49652 / DSM 12025 / NBRC 103806 / TLS) (Chlorobium tepidum).